The chain runs to 91 residues: Insertion element IS1 2 protein InsA (91 aa).

It belongs to the IS1 elements InsA family.

Absolutely required for transposition of IS1. The protein is Insertion element IS1 2 protein InsA (insA2) of Escherichia coli (strain K12).